The following is a 681-amino-acid chain: Transcriptional regulator prz1 (681 aa).

Positions 1–15 are enriched in basic and acidic residues; it reads MERQRSEEANRRFKD. Disordered stretches follow at residues 1–29, 66–96, 340–372, 410–433, and 520–563; these read MERQ…SKPD, NPSK…DSYP, SHQS…NSPF, PQIN…ANPL, and KIEN…AKSE. Composition is skewed to polar residues over residues 66-86 and 340-358; these read NPSK…FKTS and SHQS…LNSE. The span at 416 to 428 shows a compositional bias: low complexity; sequence PSSPSKSQSGPSL. Positions 528–549 are enriched in polar residues; it reads SNDYLSVRNTRPRSRSLNSLVG. A phosphoserine mark is found at S543 and S546. The span at 550–559 shows a compositional bias: low complexity; that stretch reads NKSENSSSSK. 2 C2H2-type zinc fingers span residues 570–594 and 600–622; these read YVCT…MNTH and FQCS…EQLH. The segment at 628 to 650 adopts a C2H2-type 3; degenerate zinc-finger fold; that stretch reads FACVTCNQRFARMDALNRHYKSE. The segment at 662–681 is disordered; that stretch reads RGIQVPPSRKTAVASTSKQK.

It belongs to the EGR C2H2-type zinc-finger protein family. Phosphorylated. Dephosphorylated by calcineurin which leads to rapid translocation from the cytoplasm to the nucleus.

It localises to the nucleus. Its subcellular location is the cytoplasm. Functionally, involved in the regulation of calcium ion homeostasis. Binds to the calcineurin-dependent response element. Transcriptionally regulates pmc1. In Schizosaccharomyces pombe (strain 972 / ATCC 24843) (Fission yeast), this protein is Transcriptional regulator prz1 (prz1).